Consider the following 412-residue polypeptide: Tyrosine--tRNA ligase (412 aa).

Residue Y41 participates in L-tyrosine binding. The 'HIGH' region motif lies at 46–55 (ATADSLHVGH). 2 residues coordinate L-tyrosine: Y174 and Q178. The 'KMSKS' region signature appears at 234 to 238 (KMGKS). Position 237 (K237) interacts with ATP. The S4 RNA-binding domain occupies 348–411 (LSLTDLLLEH…KKQHLHLRLE (64 aa)).

It belongs to the class-I aminoacyl-tRNA synthetase family. TyrS type 1 subfamily. In terms of assembly, homodimer.

It localises to the cytoplasm. It carries out the reaction tRNA(Tyr) + L-tyrosine + ATP = L-tyrosyl-tRNA(Tyr) + AMP + diphosphate + H(+). In terms of biological role, catalyzes the attachment of tyrosine to tRNA(Tyr) in a two-step reaction: tyrosine is first activated by ATP to form Tyr-AMP and then transferred to the acceptor end of tRNA(Tyr). This chain is Tyrosine--tRNA ligase, found in Pseudomonas aeruginosa (strain LESB58).